The sequence spans 210 residues: uncharacterized protein (210 aa).

A signal peptide spans 1–20 (MRVITLSGITLFLLASLASA). The Lumenal segment spans residues 21–175 (IELTFKLENQ…YSTVKSTQAR (155 aa)). Residues 32-115 (KQCYYLDSFH…DKIVTMEITM (84 aa)) enclose the GOLD domain. N165 is a glycosylation site (N-linked (GlcNAc...) asparagine). The helical transmembrane segment at 176–196 (IFWFSLAESIMVVALSALQVF) threads the bilayer. Over 197-210 (IVKTFFKRSGRRGV) the chain is Cytoplasmic.

This sequence belongs to the EMP24/GP25L family.

It localises to the endoplasmic reticulum membrane. This is an uncharacterized protein from Schizosaccharomyces pombe (strain 972 / ATCC 24843) (Fission yeast).